Reading from the N-terminus, the 345-residue chain is Fe(3+) ions import ATP-binding protein FbpC (345 aa).

Residues Leu-4 to Leu-236 form the ABC transporter domain. Gly-36 to Thr-43 serves as a coordination point for ATP.

The protein belongs to the ABC transporter superfamily. Fe(3+) ion importer (TC 3.A.1.10) family. The complex is composed of two ATP-binding proteins (FbpC), two transmembrane proteins (FbpB) and a solute-binding protein (FbpA).

It localises to the cell inner membrane. It carries out the reaction Fe(3+)(out) + ATP + H2O = Fe(3+)(in) + ADP + phosphate + H(+). Functionally, part of the ABC transporter complex FbpABC involved in Fe(3+) ions import. Responsible for energy coupling to the transport system. This chain is Fe(3+) ions import ATP-binding protein FbpC, found in Serratia marcescens.